The primary structure comprises 65 residues: Large ribosomal subunit protein bL35 (65 aa).

Belongs to the bacterial ribosomal protein bL35 family.

In Baumannia cicadellinicola subsp. Homalodisca coagulata, this protein is Large ribosomal subunit protein bL35.